The following is a 140-amino-acid chain: Large ribosomal subunit protein uL11 (140 aa).

This sequence belongs to the universal ribosomal protein uL11 family. Part of the ribosomal stalk of the 50S ribosomal subunit. Interacts with L10 and the large rRNA to form the base of the stalk. L10 forms an elongated spine to which L12 dimers bind in a sequential fashion forming a multimeric L10(L12)X complex. One or more lysine residues are methylated.

Its function is as follows. Forms part of the ribosomal stalk which helps the ribosome interact with GTP-bound translation factors. In Pelobacter propionicus (strain DSM 2379 / NBRC 103807 / OttBd1), this protein is Large ribosomal subunit protein uL11.